Consider the following 277-residue polypeptide: Collectin-10 (277 aa).

The signal sequence occupies residues 1 to 27; sequence MNGFASLLRRNQFILLVLFLLQIQSLG. Residues 40-107 form a disordered region; that stretch reads ATHTISPGPK…GDKGEKGLLG (68 aa). Residues 49–64 are compositionally biased toward basic and acidic residues; it reads KGDDGEKGDPGEEGKH. Residues 53–112 enclose the Collagen-like domain; the sequence is GEKGDPGEEGKHGKVGRMGPKGIKGELGDMGDQGNIGKTGPIGKKGDKGEKGLLGIPGEK. Residues 155–271 enclose the C-type lectin domain; sequence TEEKFYYIVQ…CHLTMYFVCE (117 aa). 2 cysteine pairs are disulfide-bonded: Cys-176–Cys-270 and Cys-248–Cys-262. An N-linked (GlcNAc...) asparagine glycan is attached at Asn-258.

It belongs to the COLEC10/COLEC11 family. Highly expressed in liver, placenta and adrenal gland. Moderately expressed in small intestine, lung, stomach and prostate. Weakly expressed in trachea and spleen.

It is found in the secreted. The protein resides in the golgi apparatus. It localises to the cytoplasm. Its function is as follows. Lectin that binds to various sugars: galactose &gt; mannose = fucose &gt; N-acetylglucosamine &gt; N-acetylgalactosamine. Acts as a chemoattractant, probably involved in the regulation of cell migration. This is Collectin-10 (COLEC10) from Homo sapiens (Human).